A 212-amino-acid chain; its full sequence is Putative tyrosine-protein phosphatase R622 (212 aa).

The Tyrosine-protein phosphatase domain maps to 9-191 (KISQVTNNIF…LQGYQSKKEN (183 aa)). C135 acts as the Phosphocysteine intermediate in catalysis.

Belongs to the protein-tyrosine phosphatase family. Non-receptor class dual specificity subfamily.

The catalysed reaction is O-phospho-L-tyrosyl-[protein] + H2O = L-tyrosyl-[protein] + phosphate. The sequence is that of Putative tyrosine-protein phosphatase R622 from Acanthamoeba polyphaga mimivirus (APMV).